The chain runs to 449 residues: UNC93-like protein MFSD11 (449 aa).

Residues 8-28 (LFNIVILGVAFMFMFTAFQTC) form a helical membrane-spanning segment. Residue Asn-40 is glycosylated (N-linked (GlcNAc...) asparagine). Transmembrane regions (helical) follow at residues 53-73 (AIIY…VAIV), 74-94 (GPQI…AVFI), 96-116 (PFPW…AVLW), 138-158 (IFWA…YFAW), and 170-190 (RTVF…FFLI). Ser-204 carries the phosphoserine modification. A run of 6 helical transmembrane segments spans residues 239–259 (MLLL…FSGV), 277–297 (LIGL…SLFG), 309–329 (PVVL…FLNM), 359–379 (FLLG…LGFL), 385–405 (APAF…AFFY), and 410–430 (LLHW…ISFF).

This sequence belongs to the unc-93 family. As to expression, widely expressed.

The protein localises to the membrane. The chain is UNC93-like protein MFSD11 (Mfsd11) from Mus musculus (Mouse).